Reading from the N-terminus, the 101-residue chain is Small ribosomal subunit protein uS14 (101 aa).

It belongs to the universal ribosomal protein uS14 family. Part of the 30S ribosomal subunit. Contacts proteins S3 and S10.

Functionally, binds 16S rRNA, required for the assembly of 30S particles and may also be responsible for determining the conformation of the 16S rRNA at the A site. The protein is Small ribosomal subunit protein uS14 of Burkholderia lata (strain ATCC 17760 / DSM 23089 / LMG 22485 / NCIMB 9086 / R18194 / 383).